Here is a 462-residue protein sequence, read N- to C-terminus: Fumarate hydratase class II (462 aa).

Substrate contacts are provided by residues 97-99, 127-130, 137-139, and Thr185; these read SGT, HPND, and SSN. His186 functions as the Proton donor/acceptor in the catalytic mechanism. Ser316 is a catalytic residue. Substrate-binding positions include Ser317 and 322–324; that span reads KVN.

Belongs to the class-II fumarase/aspartase family. Fumarase subfamily. Homotetramer.

It is found in the cytoplasm. The catalysed reaction is (S)-malate = fumarate + H2O. It functions in the pathway carbohydrate metabolism; tricarboxylic acid cycle; (S)-malate from fumarate: step 1/1. Involved in the TCA cycle. Catalyzes the stereospecific interconversion of fumarate to L-malate. This chain is Fumarate hydratase class II, found in Bacillus subtilis (strain 168).